Here is a 415-residue protein sequence, read N- to C-terminus: Mechanosensing system component YbdG (415 aa).

Over 1-24 (MQDLISQVEDLAGIEIDHTTSMVM) the chain is Periplasmic. The helical transmembrane segment at 25–45 (IFGIIFLTAVVVHIILHWVVL) threads the bilayer. Residues 46 to 67 (RTFEKRAIASSRLWLQIITQNK) lie on the Cytoplasmic side of the membrane. Residues 68–88 (LFHRLAFTLQGIIVNIQAVFW) traverse the membrane as a helical segment. Topologically, residues 89–104 (LQKGTEAADILTTCAQ) are periplasmic. Residues 105 to 125 (LWIMMYALLSVFSLLDVILNL) form a helical membrane-spanning segment. The Cytoplasmic portion of the chain corresponds to 126–148 (AQKFPAASQLPLKGIFQGIKLIG). A helical transmembrane segment spans residues 149-169 (AILVGILMISLLIGQSPAILI). Over 170–173 (SGLG) the chain is Periplasmic. The chain crosses the membrane as a helical span at residues 174-194 (AMAAVLMLVFKDPILGLVAGI). Over 195 to 415 (QLSANDMLKL…IRSLAGAFKQ (221 aa)) the chain is Cytoplasmic.

Belongs to the MscS (TC 1.A.23) family. As to quaternary structure, homoheptamer.

Its subcellular location is the cell inner membrane. Its function is as follows. Functions as a component of a mechanosensing system that transmits signals triggered by external osmotic changes to intracellular factors. This chain is Mechanosensing system component YbdG (ybdG), found in Shigella flexneri.